The primary structure comprises 155 residues: Small ribosomal subunit protein uS9 (155 aa).

Belongs to the universal ribosomal protein uS9 family.

The polypeptide is Small ribosomal subunit protein uS9 (Rhizobium meliloti (strain 1021) (Ensifer meliloti)).